The primary structure comprises 301 residues: Ornithine carbamoyltransferase (301 aa).

Carbamoyl phosphate-binding positions include 46–49 (STRT), glutamine 73, arginine 97, and 124–127 (HPCQ). Residues asparagine 154, aspartate 218, and 222–223 (SM) each bind L-ornithine. Carbamoyl phosphate is bound by residues 258–259 (CL) and arginine 286.

This sequence belongs to the aspartate/ornithine carbamoyltransferase superfamily. OTCase family.

The protein localises to the cytoplasm. The catalysed reaction is carbamoyl phosphate + L-ornithine = L-citrulline + phosphate + H(+). Its pathway is amino-acid biosynthesis; L-arginine biosynthesis; L-arginine from L-ornithine and carbamoyl phosphate: step 1/3. Functionally, reversibly catalyzes the transfer of the carbamoyl group from carbamoyl phosphate (CP) to the N(epsilon) atom of ornithine (ORN) to produce L-citrulline. The protein is Ornithine carbamoyltransferase (argF) of Methanothermobacter thermautotrophicus (strain ATCC 29096 / DSM 1053 / JCM 10044 / NBRC 100330 / Delta H) (Methanobacterium thermoautotrophicum).